A 156-amino-acid polypeptide reads, in one-letter code: UPF0266 membrane protein YobD (156 aa).

The Periplasmic segment spans residues 1–5; the sequence is MTITD. A helical transmembrane segment spans residues 6–26; that stretch reads LVLILFIAALLAYALYDQFIM. Over 27–44 the chain is Cytoplasmic; that stretch reads PRRNGPTLLSIALLRRGR. The helical transmembrane segment at 45 to 65 threads the bilayer; the sequence is VDSVIFVGLVAILIYNNVTSH. Residue Gly66 is a topological domain, periplasmic. Residues 67–87 traverse the membrane as a helical segment; sequence AQMTTWLLSALALMGFYIFWI. Residues 88–156 lie on the Cytoplasmic side of the membrane; sequence RTPRIIFKQR…LLIENQYLKI (69 aa).

It belongs to the UPF0266 family.

It is found in the cell inner membrane. The protein is UPF0266 membrane protein YobD (yobD) of Salmonella typhimurium (strain LT2 / SGSC1412 / ATCC 700720).